A 348-amino-acid chain; its full sequence is 3-isopropylmalate dehydrogenase (348 aa).

Residue 76-87 participates in NAD(+) binding; sequence GPKWTDPNNRPE. 4 residues coordinate substrate: R94, R104, R132, and D217. Positions 217, 241, and 245 each coordinate Mg(2+). Residue 275–287 coordinates NAD(+); the sequence is GSAPDIAGKNVAN.

The protein belongs to the isocitrate and isopropylmalate dehydrogenases family. LeuB type 1 subfamily. In terms of assembly, homodimer. It depends on Mg(2+) as a cofactor. The cofactor is Mn(2+).

The protein resides in the cytoplasm. It carries out the reaction (2R,3S)-3-isopropylmalate + NAD(+) = 4-methyl-2-oxopentanoate + CO2 + NADH. The protein operates within amino-acid biosynthesis; L-leucine biosynthesis; L-leucine from 3-methyl-2-oxobutanoate: step 3/4. Its function is as follows. Catalyzes the oxidation of 3-carboxy-2-hydroxy-4-methylpentanoate (3-isopropylmalate) to 3-carboxy-4-methyl-2-oxopentanoate. The product decarboxylates to 4-methyl-2 oxopentanoate. The protein is 3-isopropylmalate dehydrogenase of Staphylococcus aureus (strain NCTC 8325 / PS 47).